The chain runs to 831 residues: Periplasmic nitrate reductase (831 aa).

A signal peptide (tat-type signal) is located at residues 1 to 31 (MTISRRDLLKAQAAGIAAMAANIPLSSQAPA). The 57-residue stretch at 41 to 97 (ITWSKAPCRFCGTGCGVMVGVKEGRVVATHGDLLAEVNRGLNCVKGYFLSKIMYGAD) folds into the 4Fe-4S Mo/W bis-MGD-type domain. C48, C51, C55, and C83 together coordinate [4Fe-4S] cluster. Mo-bis(molybdopterin guanine dinucleotide)-binding positions include K85, Q152, N177, C181, 214 to 221 (WGSNMAEM), 245 to 249 (STFTH), 264 to 266 (GTD), M375, Q379, N485, 511 to 512 (SD), K534, D561, and 721 to 730 (TGRVLEHWHS). W797 is a binding site for substrate. The Mo-bis(molybdopterin guanine dinucleotide) site is built by N805 and K822.

The protein belongs to the prokaryotic molybdopterin-containing oxidoreductase family. NasA/NapA/NarB subfamily. In terms of assembly, component of the periplasmic nitrate reductase NapAB complex composed of NapA and NapB. It depends on [4Fe-4S] cluster as a cofactor. Mo-bis(molybdopterin guanine dinucleotide) serves as cofactor. Post-translationally, predicted to be exported by the Tat system. The position of the signal peptide cleavage has not been experimentally proven.

It is found in the periplasm. The enzyme catalyses 2 Fe(II)-[cytochrome] + nitrate + 2 H(+) = 2 Fe(III)-[cytochrome] + nitrite + H2O. Catalytic subunit of the periplasmic nitrate reductase complex NapAB. Receives electrons from NapB and catalyzes the reduction of nitrate to nitrite. In Paracoccus pantotrophus (Thiosphaera pantotropha), this protein is Periplasmic nitrate reductase.